The sequence spans 266 residues: Orotidine 5'-phosphate decarboxylase (266 aa).

Residues D37, 59–61 (KTH), 91–100 (DRKFADIGNT), Y217, and R235 each bind substrate. The Proton donor role is filled by K93.

It belongs to the OMP decarboxylase family.

The enzyme catalyses orotidine 5'-phosphate + H(+) = UMP + CO2. It functions in the pathway pyrimidine metabolism; UMP biosynthesis via de novo pathway; UMP from orotate: step 2/2. The sequence is that of Orotidine 5'-phosphate decarboxylase (URA3) from Cyberlindnera jadinii (Torula yeast).